Reading from the N-terminus, the 210-residue chain is Vacuolar protein sorting-associated protein 28 homolog (210 aa).

The VPS28 N-terminal domain maps to 1-106; sequence MSSQNANLMR…REGRPITVKD (106 aa). Residues 110-206 form the VPS28 C-terminal domain; sequence NVLKHIASIV…AYQAFNKALN (97 aa).

This sequence belongs to the VPS28 family. As to quaternary structure, component of the ESCRT-I complex (endosomal sorting complex required for transport I). In terms of tissue distribution, expressed in embryos.

It localises to the endosome. Component of the ESCRT-I complex, a regulator of vesicular trafficking process. The sequence is that of Vacuolar protein sorting-associated protein 28 homolog (vps-28) from Caenorhabditis elegans.